A 198-amino-acid chain; its full sequence is tRNA (pseudouridine(54)-N(1))-methyltransferase (198 aa).

Positions 134 and 155 each coordinate S-adenosyl-L-methionine.

It belongs to the methyltransferase superfamily. TrmY family. In terms of assembly, homodimer.

Its subcellular location is the cytoplasm. It catalyses the reaction pseudouridine(54) in tRNA + S-adenosyl-L-methionine = N(1)-methylpseudouridine(54) in tRNA + S-adenosyl-L-homocysteine + H(+). Functionally, specifically catalyzes the N1-methylation of pseudouridine at position 54 (Psi54) in tRNAs. In Thermococcus kodakarensis (strain ATCC BAA-918 / JCM 12380 / KOD1) (Pyrococcus kodakaraensis (strain KOD1)), this protein is tRNA (pseudouridine(54)-N(1))-methyltransferase.